Consider the following 480-residue polypeptide: Endo-1,6-beta-D-glucanase (480 aa).

A signal peptide spans 1–17 (MYPPALTLLLTPGLVAA). Asn-50 carries an N-linked (GlcNAc...) asparagine glycan. Glu-225 functions as the Proton donor in the catalytic mechanism. Glu-321 acts as the Nucleophile in catalysis.

The protein belongs to the glycosyl hydrolase 30 family.

The protein localises to the secreted. It carries out the reaction Random hydrolysis of (1-&gt;6)-linkages in (1-&gt;6)-beta-D-glucans.. Its function is as follows. Partially degrades N.crassa cell wall beta-D-glucan, liberating small amounts of oligosaccharides. This is Endo-1,6-beta-D-glucanase (neg-1) from Neurospora crassa (strain ATCC 24698 / 74-OR23-1A / CBS 708.71 / DSM 1257 / FGSC 987).